Reading from the N-terminus, the 208-residue chain is Small ribosomal subunit protein uS4 (208 aa).

One can recognise an S4 RNA-binding domain in the interval 98-158 (RRLDNVVYRL…EKSRKIACIN (61 aa)).

It belongs to the universal ribosomal protein uS4 family. Part of the 30S ribosomal subunit. Contacts protein S5. The interaction surface between S4 and S5 is involved in control of translational fidelity.

Its function is as follows. One of the primary rRNA binding proteins, it binds directly to 16S rRNA where it nucleates assembly of the body of the 30S subunit. Functionally, with S5 and S12 plays an important role in translational accuracy. This Geobacter metallireducens (strain ATCC 53774 / DSM 7210 / GS-15) protein is Small ribosomal subunit protein uS4.